A 925-amino-acid chain; its full sequence is Protein translocase subunit SecA (925 aa).

Residues Gln-87, 105-109 (GEGKT), and Asp-512 each bind ATP. Cys-910, Cys-912, Cys-921, and His-922 together coordinate Zn(2+).

This sequence belongs to the SecA family. In terms of assembly, monomer and homodimer. Part of the essential Sec protein translocation apparatus which comprises SecA, SecYEG and auxiliary proteins SecDF-YajC and YidC. The cofactor is Zn(2+).

The protein localises to the cell inner membrane. It localises to the cytoplasm. The catalysed reaction is ATP + H2O + cellular proteinSide 1 = ADP + phosphate + cellular proteinSide 2.. Its function is as follows. Part of the Sec protein translocase complex. Interacts with the SecYEG preprotein conducting channel. Has a central role in coupling the hydrolysis of ATP to the transfer of proteins into and across the cell membrane, serving both as a receptor for the preprotein-SecB complex and as an ATP-driven molecular motor driving the stepwise translocation of polypeptide chains across the membrane. The polypeptide is Protein translocase subunit SecA (Psychrobacter sp. (strain PRwf-1)).